The following is a 1330-amino-acid chain: MGESDAESDSSSNSSSSDTSSGSDSDARSESSSSESSGREEEEAKQEESAKDAKKTDDTDRGEKRAKERDAGQDEQPTEQKKTPAAEPRSERQHISHSAGVEKQQEEAVAAAEAESEKLNEAKKVETPVQRKEEAEASSVTKELNSPKAQEENAARELEERRKDEEQPVTTNGSSKESPVEAAAETVKPPTADHIEEGEITDKDEDDLPTKEEKKAVASKSPPKETQRKQSRSPDGKRRRPRSSSRSPSPSSRRRRRSRSKGSRTRSRSKSPIRRRSNSLERRRVERQRRHEERDKRDEERAKEREKRHQKGEPTSSRRRDDSREKKRSPERKRDRSSSTPKSKSSKTPRHTETTETNADNETVTEPAAKITERQRKTVDVLTSRTGGAYIPPAKLRMMQSQITDKSSAAYQRIAWEALKKSIHGYINKVNVTNIAIITRELLRENIVRGRGLLSRSIIQAQAASPTFTHVYAALVSIINSKFPNIGELLLKRLVIQFRRAFRRNDKMVCMSATRFIGHLVNQRVAHEILALEILTLLVETPTDDSVEVAIAFLKECGMKLTEVSSKGIGAIFEMLRNILHEGKLDKRVQYMIEVLFQIRKDGFKDHQAVVPELELVEEDDQFTHLMMLDEATETEDILNVFKFDDNYAENEDKYKGLSREILGSDDGSSSGSGSGSDSDSDSDGESGSDAEKKAEAGDIIDSTETNLIALRRTIYLTINSSLDYEECAHKLMKMQLKPGQEIELCHMFLDCCAEQRTYEKFYGLLAQRFCNINKIYIPPFEEIFKDTYQTTHRLDTNRLRNVSKFFAHLLFTDAISWDVLECIQLNEDDTTSSSRIFIKILFQELAEYMGLGKLNAKLKDDVLVESIAGLFPKDNPRNTRFSINFFTSIGLGGLTDDLRRFLKNAPKSVPAINAEILANAGGNPFRDGSAPAGNTKVAPSSSSSSSSSSDTDSEDSSEEDSSSDSSSESSSSDSSSEPKKKRKRKDKDKKKSKKATKEKSKKTKNKKKKKKAEKEQEKEKEKQRKSKKEKEKDKKRKKEEKKAAKKKSKHRRKSQESSDSSGSEDSDKSTSESSDSSNSSSDESDAEPQAKIKRQEHVEKNKFRGRTQDSDEFNLEGPGSKNRFQPNGNGQRRRDNSTGRERNRENSSYDRERNRGNSSYDRERKRGNSSYDRERNRESSYDKERKNRNAVAHDRQRKRDRSRSYERPTIRENSAPREKRMESSRSEKDSRRGDRSSRNERSDRGERSDRGERSDRGERSDRGERSDRGERSDRGERSDREKERSRAKERERDRDRDLKGQRERKRERDDGSRDRSRRERSSRRSKGRS.

Positions 1-377 are disordered; sequence MGESDAESDS…AAKITERQRK (377 aa). The segment covering 9 to 36 has biased composition (low complexity); it reads DSSSNSSSSDTSSGSDSDARSESSSSES. Positions 46–94 are enriched in basic and acidic residues; it reads QEESAKDAKKTDDTDRGEKRAKERDAGQDEQPTEQKKTPAAEPRSERQH. Residues 99-113 are compositionally biased toward low complexity; sequence AGVEKQQEEAVAAAE. The span at 115-135 shows a compositional bias: basic and acidic residues; that stretch reads ESEKLNEAKKVETPVQRKEEA. The span at 138 to 148 shows a compositional bias: polar residues; that stretch reads SSVTKELNSPK. Positions 149-166 are enriched in basic and acidic residues; sequence AQEENAARELEERRKDEE. Polar residues predominate over residues 168–177; it reads PVTTNGSSKE. 2 positions are modified to phosphothreonine: Thr-191 and Thr-201. 2 stretches are compositionally biased toward basic and acidic residues: residues 191–201 and 208–236; these read TADHIEEGEIT and LPTKEEKKAVASKSPPKETQRKQSRSPDG. Phosphoserine occurs at positions 219 and 221. Residues 252 to 277 show a composition bias toward basic residues; it reads SRRRRRSRSKGSRTRSRSKSPIRRRS. 2 stretches are compositionally biased toward basic and acidic residues: residues 278–307 and 316–325; these read NSLERRRVERQRRHEERDKRDEERAKEREK and SSRRRDDSRE. The span at 355–366 shows a compositional bias: low complexity; that stretch reads TETNADNETVTE. The 184-residue stretch at 420–603 folds into the MIF4G domain; that stretch reads KKSIHGYINK…EVLFQIRKDG (184 aa). Residues 660–697 form a disordered region; the sequence is REILGSDDGSSSGSGSGSDSDSDSDGESGSDAEKKAEA. A compositionally biased stretch (low complexity) spans 665–678; sequence SDDGSSSGSGSGSD. A compositionally biased stretch (acidic residues) spans 679–689; the sequence is SDSDSDGESGS. The MI domain maps to 710 to 826; that stretch reads ALRRTIYLTI…SWDVLECIQL (117 aa). The segment at 926-1330 is disordered; the sequence is FRDGSAPAGN…RSSRRSKGRS (405 aa). Over residues 941–951 the composition is skewed to low complexity; sequence SSSSSSSSSSD. A compositionally biased stretch (acidic residues) spans 952–963; that stretch reads TDSEDSSEEDSS. Residues 964–976 are compositionally biased toward low complexity; it reads SDSSSESSSSDSS. Positions 980–1012 are enriched in basic residues; the sequence is KKKRKRKDKDKKKSKKATKEKSKKTKNKKKKKK. Over residues 1013–1033 the composition is skewed to basic and acidic residues; sequence AEKEQEKEKEKQRKSKKEKEK. Residues 1034–1054 are compositionally biased toward basic residues; sequence DKKRKKEEKKAAKKKSKHRRK. Positions 1072–1082 are enriched in low complexity; the sequence is SESSDSSNSSS. The span at 1089–1110 shows a compositional bias: basic and acidic residues; sequence PQAKIKRQEHVEKNKFRGRTQD. Residue Thr-1108 is modified to Phosphothreonine. Residues Ser-1111, Ser-1121, Ser-1180, and Ser-1181 each carry the phosphoserine modification. Composition is skewed to basic and acidic residues over residues 1133–1195 and 1203–1320; these read RRRD…VAHD and SRSY…SRRE. Position 1182 is a phosphotyrosine (Tyr-1182). A compositionally biased stretch (basic residues) spans 1321–1330; it reads RSSRRSKGRS.

This sequence belongs to the CWC22 family. As to quaternary structure, component of the spliceosome C complex. Interacts with eIF4AIII.

It is found in the nucleus speckle. Its function is as follows. Required for pre-mRNA splicing and for exon-junction complex (EJC) assembly. Hinders eIF4AIII from non-specifically binding RNA and escorts it to the splicing machinery to promote EJC assembly on mature mRNAs. This Drosophila melanogaster (Fruit fly) protein is Pre-mRNA-splicing factor CWC22 homolog (ncm).